The chain runs to 55 residues: Mannose/glucose-specific lectin alpha chain (55 aa).

Belongs to the leguminous lectin family. Tetramer of two alpha and two beta chains.

This Lathyrus sativus (White vetchling) protein is Mannose/glucose-specific lectin alpha chain.